Reading from the N-terminus, the 198-residue chain is Recombination protein RecR (198 aa).

A C4-type zinc finger spans residues C57–C72. The Toprim domain occupies S80–P175.

It belongs to the RecR family.

Functionally, may play a role in DNA repair. It seems to be involved in an RecBC-independent recombinational process of DNA repair. It may act with RecF and RecO. The sequence is that of Recombination protein RecR from Macrococcus caseolyticus (strain JCSC5402) (Macrococcoides caseolyticum).